The following is a 230-amino-acid chain: Ribose-5-phosphate isomerase A (230 aa).

Substrate contacts are provided by residues Thr-28–Thr-31, Asp-83–Asp-86, and Lys-97–Gly-100. The Proton acceptor role is filled by Glu-106. Lys-124 is a binding site for substrate.

The protein belongs to the ribose 5-phosphate isomerase family. In terms of assembly, homodimer.

The catalysed reaction is aldehydo-D-ribose 5-phosphate = D-ribulose 5-phosphate. The protein operates within carbohydrate degradation; pentose phosphate pathway; D-ribose 5-phosphate from D-ribulose 5-phosphate (non-oxidative stage): step 1/1. In terms of biological role, catalyzes the reversible conversion of ribose-5-phosphate to ribulose 5-phosphate. The sequence is that of Ribose-5-phosphate isomerase A from Gloeobacter violaceus (strain ATCC 29082 / PCC 7421).